Here is a 371-residue protein sequence, read N- to C-terminus: Putative glutamate--cysteine ligase 2 (371 aa).

The protein belongs to the glutamate--cysteine ligase type 2 family. YbdK subfamily.

The catalysed reaction is L-cysteine + L-glutamate + ATP = gamma-L-glutamyl-L-cysteine + ADP + phosphate + H(+). Its function is as follows. ATP-dependent carboxylate-amine ligase which exhibits weak glutamate--cysteine ligase activity. In Paraburkholderia phytofirmans (strain DSM 17436 / LMG 22146 / PsJN) (Burkholderia phytofirmans), this protein is Putative glutamate--cysteine ligase 2.